A 132-amino-acid chain; its full sequence is MSMTDPIADLLVRIKNAAAVGKQTVKAPSSKIKVAIAQVLKDEGYITDLRVTALENNKSELEIVLKYFEGKPVIATLKRFSRSGLRQYRGKSELPKVMNGLGISIISTSKGIMTDAQARQLGVGGEVLCFVA.

This sequence belongs to the universal ribosomal protein uS8 family. Part of the 30S ribosomal subunit. Contacts proteins S5 and S12.

One of the primary rRNA binding proteins, it binds directly to 16S rRNA central domain where it helps coordinate assembly of the platform of the 30S subunit. This chain is Small ribosomal subunit protein uS8, found in Stenotrophomonas maltophilia (strain R551-3).